Consider the following 434-residue polypeptide: Glutamyl-tRNA reductase (434 aa).

Residues 54 to 57 (TCNR), Ser-113, 118 to 120 (EAQ), and Gln-124 contribute to the substrate site. Cys-55 acts as the Nucleophile in catalysis. 193–198 (GGGEVS) is a binding site for NADP(+).

This sequence belongs to the glutamyl-tRNA reductase family. In terms of assembly, homodimer.

The catalysed reaction is (S)-4-amino-5-oxopentanoate + tRNA(Glu) + NADP(+) = L-glutamyl-tRNA(Glu) + NADPH + H(+). The protein operates within porphyrin-containing compound metabolism; protoporphyrin-IX biosynthesis; 5-aminolevulinate from L-glutamyl-tRNA(Glu): step 1/2. Its pathway is porphyrin-containing compound metabolism; chlorophyll biosynthesis. In terms of biological role, catalyzes the NADPH-dependent reduction of glutamyl-tRNA(Glu) to glutamate 1-semialdehyde (GSA). This Chloroflexus aurantiacus (strain ATCC 29366 / DSM 635 / J-10-fl) protein is Glutamyl-tRNA reductase.